Reading from the N-terminus, the 1399-residue chain is DNA-directed RNA polymerase subunit beta' (1399 aa).

Residues C70, C72, C85, and C88 each coordinate Zn(2+). 3 residues coordinate Mg(2+): D460, D462, and D464. The Zn(2+) site is built by C814, C888, C895, and C898.

This sequence belongs to the RNA polymerase beta' chain family. As to quaternary structure, the RNAP catalytic core consists of 2 alpha, 1 beta, 1 beta' and 1 omega subunit. When a sigma factor is associated with the core the holoenzyme is formed, which can initiate transcription. Requires Mg(2+) as cofactor. It depends on Zn(2+) as a cofactor.

The enzyme catalyses RNA(n) + a ribonucleoside 5'-triphosphate = RNA(n+1) + diphosphate. Functionally, DNA-dependent RNA polymerase catalyzes the transcription of DNA into RNA using the four ribonucleoside triphosphates as substrates. The protein is DNA-directed RNA polymerase subunit beta' of Pseudomonas putida (strain ATCC 47054 / DSM 6125 / CFBP 8728 / NCIMB 11950 / KT2440).